We begin with the raw amino-acid sequence, 156 residues long: Small ribosomal subunit protein uS7 (156 aa).

The protein belongs to the universal ribosomal protein uS7 family. In terms of assembly, part of the 30S ribosomal subunit. Contacts proteins S9 and S11.

One of the primary rRNA binding proteins, it binds directly to 16S rRNA where it nucleates assembly of the head domain of the 30S subunit. Is located at the subunit interface close to the decoding center, probably blocks exit of the E-site tRNA. The sequence is that of Small ribosomal subunit protein uS7 from Mycoplasma mobile (strain ATCC 43663 / 163K / NCTC 11711) (Mesomycoplasma mobile).